The primary structure comprises 693 residues: Phosphoribosylformylglycinamidine synthase subunit PurL (693 aa).

His34 is an active-site residue. ATP-binding residues include Tyr37 and Lys76. Glu78 lines the Mg(2+) pocket. Residues 79–82 and Arg101 contribute to the substrate site; that span reads SHNH. The active-site Proton acceptor is the His80. Residue Asp102 participates in Mg(2+) binding. Gln222 is a binding site for substrate. Asp248 contacts Mg(2+). Position 292 to 294 (292 to 294) interacts with substrate; it reads ETQ. The ATP site is built by Asp470 and Gly507. Residue Ser510 participates in substrate binding.

Belongs to the FGAMS family. Monomer. Part of the FGAM synthase complex composed of 1 PurL, 1 PurQ and 2 PurS subunits.

The protein resides in the cytoplasm. It catalyses the reaction N(2)-formyl-N(1)-(5-phospho-beta-D-ribosyl)glycinamide + L-glutamine + ATP + H2O = 2-formamido-N(1)-(5-O-phospho-beta-D-ribosyl)acetamidine + L-glutamate + ADP + phosphate + H(+). The protein operates within purine metabolism; IMP biosynthesis via de novo pathway; 5-amino-1-(5-phospho-D-ribosyl)imidazole from N(2)-formyl-N(1)-(5-phospho-D-ribosyl)glycinamide: step 1/2. Functionally, part of the phosphoribosylformylglycinamidine synthase complex involved in the purines biosynthetic pathway. Catalyzes the ATP-dependent conversion of formylglycinamide ribonucleotide (FGAR) and glutamine to yield formylglycinamidine ribonucleotide (FGAM) and glutamate. The FGAM synthase complex is composed of three subunits. PurQ produces an ammonia molecule by converting glutamine to glutamate. PurL transfers the ammonia molecule to FGAR to form FGAM in an ATP-dependent manner. PurS interacts with PurQ and PurL and is thought to assist in the transfer of the ammonia molecule from PurQ to PurL. The protein is Phosphoribosylformylglycinamidine synthase subunit PurL of Pyrobaculum islandicum (strain DSM 4184 / JCM 9189 / GEO3).